Reading from the N-terminus, the 381-residue chain is Dihydroorotate dehydrogenase (quinone) (381 aa).

FMN contacts are provided by residues alanine 74–lysine 78 and threonine 98. Lysine 78 is a substrate binding site. Substrate is bound at residue asparagine 123–phenylalanine 127. Asparagine 152 and asparagine 185 together coordinate FMN. Substrate is bound at residue asparagine 185. Serine 188 acts as the Nucleophile in catalysis. Residue asparagine 190 coordinates substrate. FMN-binding residues include lysine 223 and threonine 251. A substrate-binding site is contributed by asparagine 252–threonine 253. FMN-binding positions include glycine 289, glycine 318, and tyrosine 339–threonine 340. The disordered stretch occupies residues arginine 359–alanine 381.

It belongs to the dihydroorotate dehydrogenase family. Type 2 subfamily. As to quaternary structure, monomer. FMN is required as a cofactor.

Its subcellular location is the cell membrane. The catalysed reaction is (S)-dihydroorotate + a quinone = orotate + a quinol. It functions in the pathway pyrimidine metabolism; UMP biosynthesis via de novo pathway; orotate from (S)-dihydroorotate (quinone route): step 1/1. Catalyzes the conversion of dihydroorotate to orotate with quinone as electron acceptor. This Synechococcus sp. (strain JA-2-3B'a(2-13)) (Cyanobacteria bacterium Yellowstone B-Prime) protein is Dihydroorotate dehydrogenase (quinone).